The chain runs to 302 residues: Protein transport protein SEC13 homolog A (302 aa).

WD repeat units lie at residues 9-48, 54-95, 101-142, 148-201, 208-251, and 257-296; these read GHSD…GSQH, GHRG…QWTQ, DHKV…GWDT, AHPV…WKMD, KHTD…EQWE, and DFKT…EWEQ.

This sequence belongs to the WD repeat SEC13 family. As to quaternary structure, interacts with MAG5, SEC31A and SEC31B.

The protein localises to the golgi apparatus. Its subcellular location is the endoplasmic reticulum. Required for protein transport from the endoplasmic reticulum to the Golgi apparatus. The protein is Protein transport protein SEC13 homolog A of Arabidopsis thaliana (Mouse-ear cress).